Reading from the N-terminus, the 398-residue chain is S-adenosylmethionine synthase (398 aa).

Residue 136–141 (GTGSSD) participates in ATP binding.

The protein belongs to the AdoMet synthase 2 family. Mg(2+) is required as a cofactor.

The catalysed reaction is L-methionine + ATP + H2O = S-adenosyl-L-methionine + phosphate + diphosphate. It functions in the pathway amino-acid biosynthesis; S-adenosyl-L-methionine biosynthesis; S-adenosyl-L-methionine from L-methionine: step 1/1. In terms of biological role, catalyzes the formation of S-adenosylmethionine from methionine and ATP. In Methanosarcina mazei (strain ATCC BAA-159 / DSM 3647 / Goe1 / Go1 / JCM 11833 / OCM 88) (Methanosarcina frisia), this protein is S-adenosylmethionine synthase.